The following is a 558-amino-acid chain: Kelch-like protein 23 (558 aa).

In terms of domain architecture, BTB spans 36–104; the sequence is TDITLQCPSG…AYTSQIEITE (69 aa). One can recognise a BACK domain in the interval 139–240; it reads CIGMHSFAEF…DPVYLKTALG (102 aa). 6 Kelch repeats span residues 274–320, 321–369, 370–416, 418–466, 467–508, and 510–557; these read TMYI…CLGP, NIYV…TLGG, CVYA…VLHD, IYVI…PLEN, KLYL…IMNG, and IYVT…CVYN.

This chain is Kelch-like protein 23 (KLHL23), found in Pongo abelii (Sumatran orangutan).